A 216-amino-acid chain; its full sequence is Ornithine decarboxylase antizyme 1 (216 aa).

Belongs to the ODC antizyme family. Interacts with ODC1 and thereby sterically blocks ODC homodimerization.

Its function is as follows. Ornithine decarboxylase (ODC) antizyme protein that negatively regulates ODC activity and intracellular polyamine biosynthesis and uptake in response to increased intracellular polyamine levels. Binds to ODC monomers, inhibiting the assembly of the functional ODC homodimer, and targets the monomers for ubiquitin-independent proteolytic destruction by the 26S proteasome. The sequence is that of Ornithine decarboxylase antizyme 1 (oaz1) from Xenopus laevis (African clawed frog).